The primary structure comprises 201 residues: Small ribosomal subunit protein uS4c (201 aa).

The disordered stretch occupies residues 14–43 (RLGALPGLTSKRPRAGSDLRNQSRPGKKSQ). The S4 RNA-binding domain maps to 89–169 (MRLDNILFRL…LPKHLTFHTL (81 aa)).

This sequence belongs to the universal ribosomal protein uS4 family. Part of the 30S ribosomal subunit. Contacts protein S5. The interaction surface between S4 and S5 is involved in control of translational fidelity.

It is found in the plastid. The protein localises to the chloroplast. Functionally, one of the primary rRNA binding proteins, it binds directly to 16S rRNA where it nucleates assembly of the body of the 30S subunit. In terms of biological role, with S5 and S12 plays an important role in translational accuracy. This Gossypium hirsutum (Upland cotton) protein is Small ribosomal subunit protein uS4c (rps4).